Here is a 684-residue protein sequence, read N- to C-terminus: Acetophenone carboxylase delta subunit (684 aa).

The protein belongs to the oxoprolinase family. In terms of assembly, acetophenone carboxylase consists of five subunits; a heterooctameric subcomplex of two alpha (Apc1), two beta (Apc2), two gamma (Apc3) and two delta (Apc4) subunits assembles with the epsilon (Apc5) subunit in an unknown stoichiometry. Mg(2+) is required as a cofactor. Requires Mn(2+) as cofactor.

It localises to the cytoplasm. It carries out the reaction acetophenone + hydrogencarbonate + 2 ATP + H2O = 3-oxo-3-phenylpropanoate + 2 ADP + 2 phosphate + 2 H(+). Inhibited by zinc ions, carbamoylphosphate and beta,gamma-imido-ATP. Its function is as follows. Catalyzes the carboxylation of acetophenone to form 3-oxo-3-phenylpropanoate (benzoylacetate) in the anaerobic catabolism of ethylbenzene. Also carboxylates propiophenone at the same rate and 4-acetyl-pyridine at lower rates. The protein is Acetophenone carboxylase delta subunit (apc4) of Aromatoleum aromaticum (strain DSM 19018 / LMG 30748 / EbN1) (Azoarcus sp. (strain EbN1)).